Reading from the N-terminus, the 1116-residue chain is MDPFTEKLLERTRARRENLQKKMADRPTAGTRTAALNKRPREPLLEANHQPPAPAEEAKPSSKPSPSKRRCSDNASTPDAGAENKQPKTPELPKTELSAVASHQQLRATNQTPQVSLLSSDKELTASDVKDASSVKTRMQKLADQRRYWDNNVSPSSSPPAHVPPKDIIVSPPKPQIPDVGNDTPVGRRGRFANLAATIGSWEDDLSHPFVKPNNKQEKPGTACLSKESTTSSASASMNSHSVKQDTTSCSQRPKDTTVNKAVCSGQLKNILPASKPASSVASTEVSGKSKPLAIKSPAVVTSKPNENVLPASSSLKPVSANSSPQKTERPASRIYSYQSASARNELNNNTPVQTQQKDKVATSGGVGIKSFLERFGEKCQEHSPAPLNQGHRTAVLTPNTKSIQERLLKQNDISSTASLAQQQKKEREKELAALRGRYDRRNVWTKQEDEQQGTFPETSSNLPTSDVASCSETKRAEASGITSEKSVSGHFHPNMAEQVSSPEKIPTPVQSQLPLESPRLVNEGNTGNVACEVEMSVDGSIEEINSSGIITNIFSDVLEQHDEEGEEVDECLVEQVETDTDDEEREDEEEDALNISSMSLLAPLAETVGIESPKALLSPSNKVAAGNGESCDRKRSGRFQKSHVLRAESNDGIGSSEENQNLLYSIDAYRSQRFKETDRPPIMQTIVRKEDVSSRLQDKKTASPLSVNIKQKMKTLSNEVNLQQTVIHQASQALNCCIDEDHGKGSETEAEAERLLIVATEKRAALIAELNKIKNEGPQSQKKNVSNESAPSRGCISVSEMFLPLKADFVCNATQRMDSANYYFFLMIRAGAENIVASPLTSITSTMKGDALAFPTTFSLEDVSNDFEICVEVYSLVQKKEGHAPDKKKKTMKSKAITPKRLLTSITKSNMHTPALASPGGPNAVRTSNFVLVGSHKLTLSSIGSNKFPLDKVPFLSPLEGHIYLKIKCHVNSSVEDKGFLTMFEDVSGFGAWHRRWCVLSGYCISYWTYPDDEKRKKPIGRINLANCTSRKIEPANREFCARPNTFELITVRPQREGDRETLVSQCRDTLCVTKNWLSADTKEERNLWMQKLNQFLVDLRMWQPNACYRPASKP.

Basic and acidic residues-rich tracts occupy residues 1-25 (MDPFTEKLLERTRARRENLQKKMAD) and 85-94 (KQPKTPELPK). Disordered regions lie at residues 1 to 188 (MDPF…PVGR), 205 to 257 (DLSH…PKDT), 304 to 363 (KPNE…KVAT), and 443 to 522 (NVWT…PRLV). Residues 101–119 (ASHQQLRATNQTPQVSLLS) show a composition bias toward polar residues. Over residues 120 to 133 (SDKELTASDVKDAS) the composition is skewed to basic and acidic residues. An interactions with myh9 and myh10 region spans residues 142–254 (LADQRRYWDN…QDTTSCSQRP (113 aa)). Over residues 226–242 (SKESTTSSASASMNSHS) the composition is skewed to low complexity. The interval 255 to 418 (KDTTVNKAVC…LKQNDISSTA (164 aa)) is interaction with F-actin. Composition is skewed to polar residues over residues 304 to 326 (KPNENVLPASSSLKPVSANSSPQ) and 336 to 356 (YSYQSASARNELNNNTPVQTQ). A coiled-coil region spans residues 416 to 443 (STASLAQQQKKEREKELAALRGRYDRRN). A compositionally biased stretch (polar residues) spans 453 to 472 (QGTFPETSSNLPTSDVASCS). The PH domain occupies 975–1099 (SVEDKGFLTM…WMQKLNQFLV (125 aa)).

In terms of assembly, interacts with and bundles F-actin. Interacts with the non-muscle myosin II heavy chains myh9 and myh10, and these interactions may be enhanced by the phosphorylation of myosin II regulatory light chain by mylk.

It localises to the nucleus. The protein resides in the cytoplasm. Its subcellular location is the cytoskeleton. It is found in the cell cortex. The protein localises to the cell projection. It localises to the bleb. In terms of biological role, required for cytokinesis. Essential for the structural integrity of the cleavage furrow and for completion of cleavage furrow ingression. Plays a role in bleb assembly during metaphase and anaphase of mitosis. May play a significant role in podocyte cell migration. The polypeptide is Anillin (anln) (Xenopus laevis (African clawed frog)).